The chain runs to 286 residues: Bifunctional protein FolD (286 aa).

NADP(+) contacts are provided by residues 170 to 172 (GHS) and Ile236.

It belongs to the tetrahydrofolate dehydrogenase/cyclohydrolase family. Homodimer.

The catalysed reaction is (6R)-5,10-methylene-5,6,7,8-tetrahydrofolate + NADP(+) = (6R)-5,10-methenyltetrahydrofolate + NADPH. The enzyme catalyses (6R)-5,10-methenyltetrahydrofolate + H2O = (6R)-10-formyltetrahydrofolate + H(+). It participates in one-carbon metabolism; tetrahydrofolate interconversion. Catalyzes the oxidation of 5,10-methylenetetrahydrofolate to 5,10-methenyltetrahydrofolate and then the hydrolysis of 5,10-methenyltetrahydrofolate to 10-formyltetrahydrofolate. The protein is Bifunctional protein FolD of Methanococcoides burtonii (strain DSM 6242 / NBRC 107633 / OCM 468 / ACE-M).